A 396-amino-acid polypeptide reads, in one-letter code: Ribosomal RNA large subunit methyltransferase I (396 aa).

The 78-residue stretch at 2 to 79 (TSAVYLQAGR…EKEVIDQHFF (78 aa)) folds into the PUA domain.

Belongs to the methyltransferase superfamily. RlmI family.

It is found in the cytoplasm. The catalysed reaction is cytidine(1962) in 23S rRNA + S-adenosyl-L-methionine = 5-methylcytidine(1962) in 23S rRNA + S-adenosyl-L-homocysteine + H(+). Its function is as follows. Specifically methylates the cytosine at position 1962 (m5C1962) of 23S rRNA. In Pseudoalteromonas translucida (strain TAC 125), this protein is Ribosomal RNA large subunit methyltransferase I.